We begin with the raw amino-acid sequence, 73 residues long: UPF0154 protein BCG9842_B1526 (73 aa).

Residues 3-23 (IWLGILVGVVALVAGVALGFF) traverse the membrane as a helical segment.

The protein belongs to the UPF0154 family.

The protein localises to the cell membrane. The protein is UPF0154 protein BCG9842_B1526 of Bacillus cereus (strain G9842).